We begin with the raw amino-acid sequence, 100 residues long: Co-chaperonin GroES (100 aa).

Belongs to the GroES chaperonin family. Heptamer of 7 subunits arranged in a ring. Interacts with the chaperonin GroEL.

The protein localises to the cytoplasm. In terms of biological role, together with the chaperonin GroEL, plays an essential role in assisting protein folding. The GroEL-GroES system forms a nano-cage that allows encapsulation of the non-native substrate proteins and provides a physical environment optimized to promote and accelerate protein folding. GroES binds to the apical surface of the GroEL ring, thereby capping the opening of the GroEL channel. In Mycobacterium leprae (strain Br4923), this protein is Co-chaperonin GroES.